The following is a 428-amino-acid chain: Peptidase B (428 aa).

Residues lysine 195 and aspartate 200 each contribute to the Mn(2+) site. Lysine 207 is a catalytic residue. Residues aspartate 218, aspartate 277, and glutamate 279 each coordinate Mn(2+). Arginine 281 is an active-site residue.

This sequence belongs to the peptidase M17 family. Homohexamer. It depends on Mn(2+) as a cofactor.

It is found in the cytoplasm. It catalyses the reaction Release of an N-terminal amino acid, Xaa, from a peptide or arylamide. Xaa is preferably Glu or Asp but may be other amino acids, including Leu, Met, His, Cys and Gln.. In terms of biological role, probably plays an important role in intracellular peptide degradation. In Klebsiella pneumoniae subsp. pneumoniae (strain ATCC 700721 / MGH 78578), this protein is Peptidase B.